We begin with the raw amino-acid sequence, 283 residues long: Pantothenate synthetase (283 aa).

34–41 contributes to the ATP binding site; that stretch reads MGALHDGH. Catalysis depends on histidine 41, which acts as the Proton donor. Residue glutamine 65 coordinates (R)-pantoate. Beta-alanine is bound at residue glutamine 65. Residue 152–155 participates in ATP binding; sequence GSKD. Glutamine 158 lines the (R)-pantoate pocket. ATP is bound by residues isoleucine 181 and 189 to 192; that span reads MSSR.

The protein belongs to the pantothenate synthetase family. In terms of assembly, homodimer.

The protein resides in the cytoplasm. The enzyme catalyses (R)-pantoate + beta-alanine + ATP = (R)-pantothenate + AMP + diphosphate + H(+). It functions in the pathway cofactor biosynthesis; (R)-pantothenate biosynthesis; (R)-pantothenate from (R)-pantoate and beta-alanine: step 1/1. Catalyzes the condensation of pantoate with beta-alanine in an ATP-dependent reaction via a pantoyl-adenylate intermediate. This chain is Pantothenate synthetase, found in Rhodopseudomonas palustris (strain HaA2).